The sequence spans 240 residues: Orotidine 5'-phosphate decarboxylase (240 aa).

Residues Asp-15, Lys-37, 64-73 (DLKYHDIPNT), Thr-127, Arg-188, Gln-197, Gly-217, and Arg-218 each bind substrate. Lys-66 functions as the Proton donor in the catalytic mechanism.

The protein belongs to the OMP decarboxylase family. Type 1 subfamily. In terms of assembly, homodimer.

The enzyme catalyses orotidine 5'-phosphate + H(+) = UMP + CO2. Its pathway is pyrimidine metabolism; UMP biosynthesis via de novo pathway; UMP from orotate: step 2/2. Catalyzes the decarboxylation of orotidine 5'-monophosphate (OMP) to uridine 5'-monophosphate (UMP). This chain is Orotidine 5'-phosphate decarboxylase, found in Geobacter sp. (strain M21).